Reading from the N-terminus, the 553-residue chain is Meiotic expression up-regulated protein 18 (553 aa).

The segment at 267–305 (SNETLCSNDSKHRIARLKNEDNTQKPISKKRKSKKASHK) is disordered. Over residues 275–289 (DSKHRIARLKNEDNT) the composition is skewed to basic and acidic residues. Residues 293-304 (ISKKRKSKKASH) are compositionally biased toward basic residues.

This is Meiotic expression up-regulated protein 18 (meu18) from Schizosaccharomyces pombe (strain 972 / ATCC 24843) (Fission yeast).